Reading from the N-terminus, the 279-residue chain is Phosphonates import ATP-binding protein PhnC 2 (279 aa).

The 244-residue stretch at 10-253 (LSLKGVSVRY…VARNLYAKQS (244 aa)) folds into the ABC transporter domain. 43-50 (GASGAGKS) contacts ATP. Over residues 253–262 (SNASNTSAST) the composition is skewed to low complexity. Positions 253-279 (SNASNTSASTDSPRTLQSSQTKELLPC) are disordered. Over residues 263-279 (DSPRTLQSSQTKELLPC) the composition is skewed to polar residues.

It belongs to the ABC transporter superfamily. Phosphonates importer (TC 3.A.1.9.1) family. In terms of assembly, the complex is composed of two ATP-binding proteins (PhnC), two transmembrane proteins (PhnE) and a solute-binding protein (PhnD).

The protein localises to the cell inner membrane. It catalyses the reaction phosphonate(out) + ATP + H2O = phosphonate(in) + ADP + phosphate + H(+). Functionally, part of the ABC transporter complex PhnCDE involved in phosphonates import. Responsible for energy coupling to the transport system. The sequence is that of Phosphonates import ATP-binding protein PhnC 2 from Cupriavidus metallidurans (strain ATCC 43123 / DSM 2839 / NBRC 102507 / CH34) (Ralstonia metallidurans).